Reading from the N-terminus, the 378-residue chain is Lysocardiolipin acyltransferase 1 (378 aa).

Helical transmembrane passes span 9–29 (FVVA…GPFL) and 46–66 (IVAT…GAKV). An HXXXXD motif motif is present at residues 85-90 (HRTRMD). The next 2 membrane-spanning stretches (helical) occupy residues 302-322 (LRVL…PMGT) and 336-358 (FAAM…LIEL).

This sequence belongs to the 1-acyl-sn-glycerol-3-phosphate acyltransferase family.

The protein localises to the endoplasmic reticulum membrane. The enzyme catalyses a 1-acyl-sn-glycero-3-phosphate + an acyl-CoA = a 1,2-diacyl-sn-glycero-3-phosphate + CoA. The catalysed reaction is a 1-acyl-sn-glycero-3-phospho-(1D-myo-inositol) + an acyl-CoA = a 1,2-diacyl-sn-glycero-3-phospho-(1D-myo-inositol) + CoA. It catalyses the reaction 1-acyl-sn-glycero-3-phospho-(1'-sn-glycerol) + an acyl-CoA = a 1,2-diacyl-sn-glycero-3-phospho-(1'-sn-glycerol) + CoA. It carries out the reaction 1-hexadecanoyl-sn-glycero-3-phosphate + (9Z)-octadecenoyl-CoA = 1-hexadecanoyl-2-(9Z-octadecenoyl)-sn-glycero-3-phosphate + CoA. The enzyme catalyses 1-(9Z-octadecenoyl)-sn-glycero-3-phosphate + (9Z)-octadecenoyl-CoA = 1,2-di-(9Z-octadecenoyl)-sn-glycero-3-phosphate + CoA. The catalysed reaction is 1-(9Z,12Z)-octadecadienoyl-sn-glycero-3-phosphate + (9Z)-octadecenoyl-CoA = 1-(9Z,12Z)-octadecadienoyl-2-(9Z)-octadecenoyl-sn-glycero-3-phosphate + CoA. It catalyses the reaction 1-(9Z,12Z,15Z)-octadecatrienoyl-sn-glycero-3-phosphate + (9Z)-octadecenoyl-CoA = 1-(9Z,12Z,15Z)-octadecatrienoyl-2-(9Z)-octadecenoyl-sn-glycero-3-phosphate + CoA. It carries out the reaction 1-(9Z-octadecenoyl)-sn-glycero-3-phosphate + hexadecanoyl-CoA = 1-(9Z)-octadecenoyl-2-hexadecanoyl-sn-glycero-3-phosphate + CoA. The enzyme catalyses 1-(9Z-octadecenoyl)-sn-glycero-3-phosphate + octadecanoyl-CoA = 1-(9Z-octadecenoyl)-2-octadecanoyl-sn-glycero-3-phosphate + CoA. The catalysed reaction is 1-acyl-sn-glycero-3-phospho-(1'-sn-glycerol) + (9Z)-octadecenoyl-CoA = 1-acyl-2-(9Z-octadecenoyl)-sn-glycero-3-phospho-(1'-sn-glycerol) + CoA. It catalyses the reaction a 1-acyl-sn-glycero-3-phospho-(1D-myo-inositol) + (9Z)-octadecenoyl-CoA = a 1-acyl-2-(9Z-octadecenoyl)-sn-glycero-3-phospho-(1D-myo-inositol) + CoA. It carries out the reaction 1-hexadecanoyl-sn-glycero-3-phospho-(1D-myo-inositol) + hexadecanoyl-CoA = 1,2-dihexadecanoyl-sn-glycero-3-phospho-(1D-myo-inositol) + CoA. The enzyme catalyses 1-hexadecanoyl-sn-glycero-3-phospho-(1D-myo-inositol) + octadecanoyl-CoA = 1-hexadecanoyl-2-octadecanoyl-sn-glycero-3-phospho-(1D-myo-inositol) + CoA. The catalysed reaction is 1-hexadecanoyl-sn-glycero-3-phospho-(1D-myo-inositol) + (9Z)-octadecenoyl-CoA = 1-hexadecanoyl-2-(9Z-octadecenoyl)-sn-glycero-3-phospho-(1D-myo-inositol) + CoA. It catalyses the reaction 1-hexadecanoyl-sn-glycero-3-phospho-(1D-myo-inositol) + (9Z,12Z)-octadecadienoyl-CoA = 1-hexadecanoyl-2-(9Z,12Z-octadecadienoyl)-sn-glycero-3-phospho-(1D-myo-inositol) + CoA. It carries out the reaction 1-hexadecanoyl-sn-glycero-3-phospho-(1D-myo-inositol) + (5Z,8Z,11Z,14Z)-eicosatetraenoyl-CoA = 1-hexadecanoyl-2-(5Z,8Z,11Z,14Z-eicosatetraenoyl)-sn-glycero-3-phospho-D-myo-inositol + CoA. The enzyme catalyses 1-hexadecanoyl-sn-glycero-3-phospho-(1'-sn-glycerol) + hexadecanoyl-CoA = 1,2-dihexadecanoyl-sn-glycero-3-phospho-(1'-sn-glycerol) + CoA. The catalysed reaction is 1-hexadecanoyl-sn-glycero-3-phospho-(1'-sn-glycerol) + octadecanoyl-CoA = 1-hexadecanoyl-2-octadecanoyl-sn-glycero-3-phospho-(1'-sn-glycerol) + CoA. It catalyses the reaction 1-hexadecanoyl-sn-glycero-3-phospho-(1'-sn-glycerol) + (9Z)-octadecenoyl-CoA = 1-hexadecanoyl-2-(9Z-octadecenoyl)-sn-glycero-3-phospho-(1'-sn-glycerol) + CoA. It carries out the reaction 1-hexadecanoyl-sn-glycero-3-phospho-(1'-sn-glycerol) + (9Z,12Z)-octadecadienoyl-CoA = 1-hexadecanoyl-2-(9Z,12Z-octadecadienoyl)-sn-glycero-3-phospho-(1'-sn-glycerol) + CoA. The enzyme catalyses 1-tetradecanoyl-sn-glycero-3-phospho-(1'-sn-glycerol) + (9Z)-octadecenoyl-CoA = 1-tetradecanoyl-2-(9Z-octadecenoyl)-sn-glycero-3-phospho-(1'-sn-glycerol) + CoA. The catalysed reaction is 1-octadecanoyl-sn-glycero-3-phospho-(1'-sn-glycerol) + (9Z)-octadecenoyl-CoA = 1-octadecanoyl-2-(9Z-octadecenoyl)-sn-glycero-3-phospho-(1'-sn-glycerol) + CoA. It catalyses the reaction 1-(9Z-octadecenoyl)-sn-glycero-3-phospho-(1'-sn-glycerol) + (9Z)-octadecenoyl-CoA = 1,2-di-(9Z-octadecenoyl)-sn-glycero-3-phospho-(1'-sn-glycerol) + CoA. It carries out the reaction 1-hexadecanoyl-sn-glycero-3-phospho-(1D-myo-inositol) + dodecanoyl-CoA = 1-hexadecanoyl-2-dodecanoyl-sn-glycero-3-phospho-(1D-myo-inositol) + CoA. The enzyme catalyses 1',3'-bis-[1-acyl-sn-glycero-3-phospho]-glycerol + (9Z)-octadecenoyl-CoA = 1'-[1-acyl-2-(9Z)-octadecenoyl-sn-glycero-3-phospho],3'-[1-acyl,2-hydroxy-sn-glycero-3-phospho]-glycerol + CoA. The catalysed reaction is 1'-[1,2-diacyl-sn-glycero-3-phospho],3'-[1-acyl-sn-glycero-3-phospho]-glycerol + (9Z)-octadecenoyl-CoA = 1'-[1,2-diacyl-sn-glycero-3-phospho],3'-[1-acyl,2-(9Z)-octadecenoyl-sn-glycero-3-phospho]-glycerol + CoA. It catalyses the reaction 1'-[1,2-diacyl-sn-glycero-3-phospho],3'-[1-acyl-sn-glycero-3-phospho]-glycerol + (9Z,12Z)-octadecadienoyl-CoA = 1'-[1,2-diacyl-sn-glycero-3-phospho],3'-[1-acyl,2-(9Z,12Z)-octadecadienoyl-sn-glycero-3-phospho]-glycerol + CoA. It carries out the reaction 1'-[1,2-diacyl-sn-glycero-3-phospho],3'-[1-acyl-sn-glycero-3-phospho]-glycerol + dodecanoyl-CoA = 1'-[1,2-diacyl-sn-glycero-3-phospho],3'-[1-acyl,2-dodecanoyl-sn-glycero-3-phospho]-glycerol + CoA. The enzyme catalyses 1',3'-bis-[1-acyl-sn-glycero-3-phospho]-glycerol + dodecanoyl-CoA = 1'-[1-acyl-2-dodecanoyl-sn-glycero-3-phospho],3'-[1-acyl,2-hydroxy-sn-glycero-3-phospho]-glycerol + CoA. The catalysed reaction is a 1-acyl-sn-glycero-3-phosphate + (9Z)-octadecenoyl-CoA = a 1-acyl-2-(9Z-octadecenoyl)-sn-glycero-3-phosphate + CoA. It catalyses the reaction 1',3'-bis-[1-acyl-sn-glycero-3-phospho]-glycerol + (9Z,12Z)-octadecadienoyl-CoA = 1'-[1-acyl-2-(9Z,12Z)-octadecadienoyl-sn-glycero-3-phospho],3'-[1-acyl,2-hydroxy-sn-glycero-3-phospho]-glycerol + CoA. It carries out the reaction 1',3'-bis-[1-acyl-sn-glycero-3-phospho]-glycerol + hexadecanoyl-CoA = 1'-[1-acyl-2-hexadecanoyl-sn-glycero-3-phospho],3'-[1-acyl,2-hydroxy-sn-glycero-3-phospho]-glycerol + CoA. The enzyme catalyses 1',3'-bis-[1-acyl-sn-glycero-3-phospho]-glycerol + octadecanoyl-CoA = 1'-[1-acyl-2-octadecanoyl-sn-glycero-3-phospho],3'-[1-acyl,2-hydroxy-sn-glycero-3-phospho]-glycerol + CoA. The catalysed reaction is 1'-[1,2-diacyl-sn-glycero-3-phospho],3'-[1-acyl-sn-glycero-3-phospho]-glycerol + octanoyl-CoA = 1'-[1,2-diacyl-sn-glycero-3-phospho],3'-[1-acyl,2-octanoyl-sn-glycero-3-phospho]-glycerol + CoA. It catalyses the reaction 1',3'-bis-[1-acyl-sn-glycero-3-phospho]-glycerol + octanoyl-CoA = 1'-[1-acyl-2-octanoyl-sn-glycero-3-phospho],3'-[1-acyl,2-hydroxy-sn-glycero-3-phospho]-glycerol + CoA. It carries out the reaction 1'-[1,2-diacyl-sn-glycero-3-phospho],3'-[1-acyl-sn-glycero-3-phospho]-glycerol + hexadecanoyl-CoA = 1'-[1,2-diacyl-sn-glycero-3-phospho],3'-[1-acyl,2-hexadecanoyl-sn-glycero-3-phospho]-glycerol + CoA. The enzyme catalyses 1'-[1,2-diacyl-sn-glycero-3-phospho],3'-[1-acyl-sn-glycero-3-phospho]-glycerol + (5Z,8Z,11Z,14Z)-eicosatetraenoyl-CoA = 1'-[1,2-diacyl-sn-glycero-3-phospho],3'-[1-acyl,2-(5Z,8Z,11Z,14Z)-eicosatetraenoyl-sn-glycero-3-phospho]-glycerol + CoA. The catalysed reaction is 1',3'-bis-[1-acyl-sn-glycero-3-phospho]-glycerol + (5Z,8Z,11Z,14Z)-eicosatetraenoyl-CoA = 1'-[1-acyl-2-(5Z,8Z,11Z,14Z)-eicosatetraenoyl-sn-glycero-3-phospho],3'-[1-acyl,2-hydroxy-sn-glycero-3-phospho]-glycerol + CoA. It catalyses the reaction a 1-acyl-sn-glycero-3-phospho-(1D-myo-inositol) + octadecanoyl-CoA = a 1-acyl-2-octadecanoyl-sn-glycero-3-phospho-(1D-myo-inositol) + CoA. It carries out the reaction a 2-acyl-sn-glycero-3-phospho-D-myo-inositol + octadecanoyl-CoA = 1-octadecanoyl-2-acyl-sn-glycero-3-phospho-1D-myo-inositol + CoA. The protein operates within phospholipid metabolism; CDP-diacylglycerol biosynthesis; CDP-diacylglycerol from sn-glycerol 3-phosphate: step 2/3. Exhibits acyl-CoA:lysocardiolipin acyltransferase (ALCAT) activity; catalyzes the reacylation of lyso-cardiolipin to cardiolipin (CL), a key step in CL remodeling. Recognizes both monolysocardiolipin and dilysocardiolipin as substrates with a preference for linoleoyl-CoA and oleoyl-CoA as acyl donors. Also exhibits 1-acyl-sn-glycerol-3-phosphate acyltransferase activity (AGPAT) activity; converts 1-acyl-sn-glycerol-3- phosphate (lysophosphatidic acid or LPA) into 1,2-diacyl-sn-glycerol-3- phosphate (phosphatidic acid or PA) by incorporating an acyl moiety at the sn-2 position of the glycerol backbone. Possesses both lysophosphatidylinositol acyltransferase (LPIAT) and lysophosphatidylglycerol acyltransferase (LPGAT) activities. Required for establishment of the hematopoietic and endothelial lineages. The sequence is that of Lysocardiolipin acyltransferase 1 (LCLAT1) from Gallus gallus (Chicken).